A 517-amino-acid polypeptide reads, in one-letter code: T-complex protein 11-like protein 2 (517 aa).

The interval 1–59 (MPFNGEKQYVNEDQQSDSESSRFSESTASLSDYGCSRQSFTSDSSSKSSSPASTSPPRG) is disordered. The residue at position 16 (S16) is a Phosphoserine. Residues 17-55 (DSESSRFSESTASLSDYGCSRQSFTSDSSSKSSSPASTS) are compositionally biased toward low complexity.

It belongs to the TCP11 family. In terms of assembly, interacts with FMNL2; this interaction promotes muscle-derived satellite cell (MDSC) migration and differentiation.

It localises to the cytoplasm. The protein resides in the cytoskeleton. Functionally, promotes the migration of muscle-derived satellite cells (MDSCs) during differentiation throught interaction with FMNL2 and therefore may participate in microfilament assembly. In Rattus norvegicus (Rat), this protein is T-complex protein 11-like protein 2.